The following is a 125-amino-acid chain: Ribosome-binding factor A (125 aa).

This sequence belongs to the RbfA family. In terms of assembly, monomer. Binds 30S ribosomal subunits, but not 50S ribosomal subunits or 70S ribosomes.

It is found in the cytoplasm. One of several proteins that assist in the late maturation steps of the functional core of the 30S ribosomal subunit. Associates with free 30S ribosomal subunits (but not with 30S subunits that are part of 70S ribosomes or polysomes). Required for efficient processing of 16S rRNA. May interact with the 5'-terminal helix region of 16S rRNA. The polypeptide is Ribosome-binding factor A (Methylobacillus flagellatus (strain ATCC 51484 / DSM 6875 / VKM B-1610 / KT)).